The primary structure comprises 899 residues: Solute carrier family 12 member 9 (899 aa).

Residues 1–44 lie on the Cytoplasmic side of the membrane; it reads MTSESSPLLHYRLFSVSDGGLGPPDSSPIMTDAVTVGTGPTQRK. Residues 45 to 65 form a helical membrane-spanning segment; it reads LSTFFGVVVPTVLSMFSIVVF. Residues 66–80 are Extracellular-facing; it reads MRIGFVVGHAGLLQS. The helical transmembrane segment at 81 to 101 threads the bilayer; that stretch reads LLMLFVAYVIIWLTVLSVCAI. At 102-127 the chain is on the cytoplasmic side; it reads STNGAVQGGGAYFMISRTLGPEFGGS. The chain crosses the membrane as a helical span at residues 128-148; it reads IGLMFYLANVFACGVYVLGLV. The Extracellular portion of the chain corresponds to 149–176; that stretch reads EAVLDVFGRDPSDVTDSLRSLPQGYGYS. The helical transmembrane segment at 177-197 threads the bilayer; it reads FLYASIILLLCMAICLVGASI. At 198 to 202 the chain is on the cytoplasmic side; it reads YSQAS. A helical membrane pass occupies residues 203 to 223; it reads FFIFLLVFVVLLTILISFLAV. Over 224–266 the chain is Extracellular; that stretch reads RPLTVSIRHGGNVTMTGVYTGINSSTLHNNLQADYSLDYTTGN. Residues Asn235 and Asn246 are each glycosylated (N-linked (GlcNAc...) asparagine). Residues 267–287 form a helical membrane-spanning segment; that stretch reads LMNFATVFAVMFNGCTGIMAG. Topologically, residues 288 to 304 are cytoplasmic; that stretch reads CNLSGELKQPSRSIPMG. A helical transmembrane segment spans residues 305-325; it reads TIIAVIITFFVYLILFIFTAF. Residues 326–347 lie on the Extracellular side of the membrane; that stretch reads TCDRTLLREDYGFFRSINIWPP. The chain crosses the membrane as a helical span at residues 348 to 368; the sequence is FVLIGVYATSLSASMSTLIGA. Topologically, residues 369 to 393 are cytoplasmic; it reads SRILHALAKDDLFGVLLAPAKLVSK. A helical transmembrane segment spans residues 394–414; that stretch reads GGNPWGAVVYTWALVQLVLLA. At 415 to 419 the chain is on the extracellular side; sequence GKLNT. Residues 420 to 440 traverse the membrane as a helical segment; it reads IAGIVTVFYLIAYAAIDLACL. At 441 to 469 the chain is on the cytoplasmic side; sequence ALEWASAPNFRPTFRFFSWHTCLLGILSS. A helical transmembrane segment spans residues 470-490; the sequence is LVMMFLINPAYASGSIVLLLL. Residues 491–739 lie on the Extracellular side of the membrane; it reads LLGSIHFRSS…PLDLLRPQAS (249 aa). The helical transmembrane segment at 740 to 760 threads the bilayer; that stretch reads AYVDVCSLFLLQMACILNMAA. At 761–899 the chain is on the cytoplasmic side; the sequence is SWRRYQLRVF…GLTPVTCTEL (139 aa).

It belongs to the SLC12A transporter family.

It is found in the cell membrane. The protein resides in the lysosome membrane. In terms of biological role, seems to correspond to a subunit of a multimeric transport system and thus, additional subunits may be required for its function. May play a role in lysosomal ion flux and osmoregulation. This chain is Solute carrier family 12 member 9 (slc12a9), found in Xenopus laevis (African clawed frog).